The chain runs to 1217 residues: Disease resistance protein RPS4 (1217 aa).

The TIR domain maps to 14–175 (PQHQVFINFR…EIVKAVKTAL (162 aa)). 23–28 (RGADLR) is an NAD(+) binding site. The interval 33 to 34 (SH) is important for interaction with RRS1. The active site involves glutamate 88. Positions 211–472 (EQRLKDLEEK…FRSQDKDYVE (262 aa)) constitute an NB-ARC domain. 11 LRR repeats span residues 581 to 606 (MGNL…KINI), 614 to 636 (LKEV…DFNP), 637 to 659 (INLV…DKDT), 682 to 706 (AEKL…MKKM), 708 to 728 (MLAF…EMNL), 729 to 749 (ISLK…PLIS), 750 to 774 (DNIE…KLQR), 796 to 818 (LKAL…EIDI), 819 to 842 (SFLN…SVQY), 843 to 860 (LCLS…GISQ), and 861 to 887 (LSQL…NLQC). The interval 1161–1195 (TTEGVDGRVNKKKKTRMDNGRPKKKQRSGRDDNQT) is disordered. The short motif at 1170–1177 (NKKKKTRM) is the Nuclear localization signal element.

The protein belongs to the disease resistance TIR-NB-LRR family. In terms of assembly, interacts with EDS1. Interacts with SRFR1. Interacts with RRS1.

Its subcellular location is the endomembrane system. It is found in the cytoplasm. The protein localises to the nucleus. It carries out the reaction NAD(+) + H2O = ADP-D-ribose + nicotinamide + H(+). Functionally, disease resistance (R) protein that specifically recognizes the AvrRps4 type III effector avirulence protein from P.syringae. Resistance proteins guard the plant against pathogens that contain an appropriate avirulence protein via an indirect interaction with this avirulence protein. That triggers a defense system including the hypersensitive response, which restricts the pathogen growth. Probably acts as a NAD(+) hydrolase (NADase): in response to activation, catalyzes cleavage of NAD(+) into ADP-D-ribose (ADPR) and nicotinamide; NAD(+) cleavage triggering a defense system that promotes cell death. The combined presence of both regular and alternative RPS4 transcripts with truncated open reading frames (ORFs) is necessary for function. RPS4 function is regulated at multiple levels, including gene expression, alternative splicing, and protein stability. When over-expressed, confers temperature-conditioned EDS1-dependent auto-immunity. Heterodimerization with RRS1 is required to form a functional complex to recognize AvrRps4 and PopP2. Abscisic acid deficiency enhances nuclear accumulation of RPS4 and its cell death-inducing activity. The polypeptide is Disease resistance protein RPS4 (Arabidopsis thaliana (Mouse-ear cress)).